A 327-amino-acid polypeptide reads, in one-letter code: Protein EMSY-LIKE 1 (327 aa).

The region spanning 1–88 (METQIHQLEQ…HATIQPFDVL (88 aa)) is the ENT domain. Positions 32 to 58 (ESLITELRKELRVSDDEHRELLSRVNK) form a coiled coil. Disordered stretches follow at residues 206-257 (GHGS…SDDI) and 305-327 (ADTS…MPQG). Residues 214-232 (GNRRGQIHGGRGRGPRIHQ) show a composition bias toward basic residues. Residues 281–306 (LELDKAKKMLKEHEQALIAAIARLAD) adopt a coiled-coil conformation. Ser308 carries the post-translational modification Phosphoserine. Positions 318–327 (YSHDHPMPQG) are enriched in basic and acidic residues.

As to quaternary structure, isoform 1 interacts with EDM2 in nucleus.

It localises to the nucleus. In terms of biological role, probably involved in the regulation of chromatin states. Contributes to RPP7-mediated and basal immunity, especially against Hyaloperonospora arabidopsidis isolate Hiks1. Regulates negatively EDM2-dependent floral transition. The polypeptide is Protein EMSY-LIKE 1 (Arabidopsis thaliana (Mouse-ear cress)).